Consider the following 301-residue polypeptide: Helicase VP6-A (301 aa).

Disordered stretches follow at residues 1–99 (MIDW…TTGT) and 163–208 (RRKE…TSVG). 3 stretches are compositionally biased toward basic and acidic residues: residues 8–30 (ESGK…KDGE), 37–55 (GQKK…DRRV), and 67–81 (GFRE…RGDG). K82 contributes to the ATP binding site. Composition is skewed to basic and acidic residues over residues 163–177 (RRKE…VAEK) and 186–202 (VHGD…KTPE).

It belongs to the orbivirus VP6 family. Homohexamer.

It is found in the virion. It catalyses the reaction ATP + H2O = ADP + phosphate + H(+). Functionally, ATP dependent RNA helicase essential for RNA packaging and viral transcription. Possesses ss- and dsRNA-binding capacity. The protein is Helicase VP6-A (Segment-9) of Bluetongue virus 2 (isolate USA) (BTV 2).